A 452-amino-acid polypeptide reads, in one-letter code: Prenyltransferase fsdK (452 aa).

It belongs to the tryptophan dimethylallyltransferase family.

It functions in the pathway mycotoxin biosynthesis. In terms of biological role, prenyltransferase; part of the gene cluster that mediates the biosynthesis of fusaridione A, a bright yellow trans-fused decalin-containing tetramic acid with antimicrobial activity. The PKS module of fsdS catalyzes the formation of the polyketide unit which is then conjugated to L-tyrosine by the condensation domain of the fsdS NRPS module. Activity of the Dieckmann cyclase domain (RED) results in release of the intermediate fusaridione A. The unstable pyrrolidinedione ring of fusaridione A is opened through a reverse-Dieckmann reaction to afford its ring-opened form. The protein is Prenyltransferase fsdK of Fusarium heterosporum.